Here is a 130-residue protein sequence, read N- to C-terminus: Histone H2A type 2-A (130 aa).

A disordered region spans residues 1 to 22; it reads MSGRGKQGGKARAKAKSRSSRA. Ser2 carries the N-acetylserine modification. Ser2 carries the phosphoserine; by RPS6KA5 modification. A Citrulline; alternate modification is found at Arg4. Arg4 is modified (symmetric dimethylarginine; by PRMT5; alternate). N6-(2-hydroxyisobutyryl)lysine; alternate occurs at positions 6 and 10. Lys6 bears the N6-(beta-hydroxybutyryl)lysine; alternate mark. An N6-acetyllysine; alternate modification is found at Lys6. Positions 7-19 are enriched in basic residues; the sequence is QGGKARAKAKSRS. Lys10 carries the N6-lactoyllysine; alternate modification. Residue Lys10 is modified to N6-succinyllysine; alternate. Residues Lys14 and Lys16 each participate in a glycyl lysine isopeptide (Lys-Gly) (interchain with G-Cter in ubiquitin) cross-link. Residue Lys37 is modified to N6-(2-hydroxyisobutyryl)lysine; alternate. An N6-(beta-hydroxybutyryl)lysine; alternate modification is found at Lys37. Residue Lys37 is modified to N6-crotonyllysine; alternate. 2 positions are modified to N6-(2-hydroxyisobutyryl)lysine: Lys75 and Lys76. N6-(2-hydroxyisobutyryl)lysine; alternate is present on Lys96. Lys96 is modified (N6-succinyllysine; alternate). At Lys96 the chain carries N6-glutaryllysine; alternate. Lys100 is subject to N6-glutaryllysine. An N5-methylglutamine modification is found at Gln105. Lys119 carries the N6-(2-hydroxyisobutyryl)lysine; alternate modification. Residues Lys119 and Lys120 each carry the N6-crotonyllysine; alternate modification. An N6-glutaryllysine; alternate mark is found at Lys119 and Lys120. N6-(beta-hydroxybutyryl)lysine; alternate is present on Lys120. Lys120 participates in a covalent cross-link: Glycyl lysine isopeptide (Lys-Gly) (interchain with G-Cter in ubiquitin); alternate. Thr121 bears the Phosphothreonine; by DCAF1 mark. Lys126 carries the N6-(beta-hydroxybutyryl)lysine; alternate modification. Lys126 is subject to N6-crotonyllysine; alternate. Lys126 carries the post-translational modification N6-glutaryllysine; alternate.

This sequence belongs to the histone H2A family. The nucleosome is a histone octamer containing two molecules each of H2A, H2B, H3 and H4 assembled in one H3-H4 heterotetramer and two H2A-H2B heterodimers. The octamer wraps approximately 147 bp of DNA. Post-translationally, deiminated on Arg-4 in granulocytes upon calcium entry. In terms of processing, monoubiquitination of Lys-120 (H2AK119Ub) by RING1, TRIM37 and RNF2/RING2 complex gives a specific tag for epigenetic transcriptional repression and participates in X chromosome inactivation of female mammals. It is involved in the initiation of both imprinted and random X inactivation. Ubiquitinated H2A is enriched in inactive X chromosome chromatin. Ubiquitination of H2A functions downstream of methylation of 'Lys-27' of histone H3 (H3K27me). H2AK119Ub by RNF2/RING2 can also be induced by ultraviolet and may be involved in DNA repair. Following DNA double-strand breaks (DSBs), it is ubiquitinated through 'Lys-63' linkage of ubiquitin moieties by the E2 ligase UBE2N and the E3 ligases RNF8 and RNF168, leading to the recruitment of repair proteins to sites of DNA damage. Ubiquitination at Lys-14 and Lys-16 (H2AK13Ub and H2AK15Ub, respectively) in response to DNA damage is initiated by RNF168 that mediates monoubiquitination at these 2 sites, and 'Lys-63'-linked ubiquitin are then conjugated to monoubiquitin; RNF8 is able to extend 'Lys-63'-linked ubiquitin chains in vitro. H2AK119Ub and ionizing radiation-induced 'Lys-63'-linked ubiquitination (H2AK13Ub and H2AK15Ub) are distinct events. Phosphorylation on Ser-2 (H2AS1ph) is enhanced during mitosis. Phosphorylation on Ser-2 by RPS6KA5/MSK1 directly represses transcription. Acetylation of H3 inhibits Ser-2 phosphorylation by RPS6KA5/MSK1. Phosphorylation at Thr-121 (H2AT120ph) by DCAF1 is present in the regulatory region of many tumor suppresor genes and down-regulates their transcription. Post-translationally, symmetric dimethylation on Arg-4 by the PRDM1/PRMT5 complex may play a crucial role in the germ-cell lineage. In terms of processing, glutamine methylation at Gln-105 (H2AQ104me) by FBL is specifically dedicated to polymerase I. It is present at 35S ribosomal DNA locus and impairs binding of the FACT complex. Crotonylation (Kcr) is specifically present in male germ cells and marks testis-specific genes in post-meiotic cells, including X-linked genes that escape sex chromosome inactivation in haploid cells. Crotonylation marks active promoters and enhancers and confers resistance to transcriptional repressors. It is also associated with post-meiotically activated genes on autosomes. Post-translationally, hydroxybutyrylation of histones is induced by starvation. In terms of processing, lactylated in macrophages by EP300/P300 by using lactoyl-CoA directly derived from endogenous or exogenous lactate, leading to stimulates gene transcription.

Its subcellular location is the nucleus. The protein resides in the chromosome. Its function is as follows. Core component of nucleosome. Nucleosomes wrap and compact DNA into chromatin, limiting DNA accessibility to the cellular machineries which require DNA as a template. Histones thereby play a central role in transcription regulation, DNA repair, DNA replication and chromosomal stability. DNA accessibility is regulated via a complex set of post-translational modifications of histones, also called histone code, and nucleosome remodeling. This chain is Histone H2A type 2-A (Hist2h2aa1), found in Mus musculus (Mouse).